The following is a 595-amino-acid chain: Laccase-18 (595 aa).

Residues 1–29 (MEKLSTAASLFCVVVAATALAMAVVGGEA) form the signal peptide. Plastocyanin-like domains lie at 37–153 (MVHE…PRNG) and 162–316 (KDVP…YAGA). N-linked (GlcNAc...) asparagine glycans are attached at residues Asn42 and Asn48. Residues His87 and His89 each contribute to the Cu cation site. Residue Asn121 is glycosylated (N-linked (GlcNAc...) asparagine). Residues His132 and His134 each contribute to the Cu cation site. N-linked (GlcNAc...) asparagine glycosylation is found at Asn206, Asn345, Asn382, Asn402, Asn409, Asn439, and Asn470. The Plastocyanin-like 3 domain occupies 429–571 (DFPVRPPRPF…ATAFIVEDGP (143 aa)). The Cu cation site is built by Asn488, His491, His493, His550, Cys551, His552, His556, and Met561. Residues 570–595 (GPTPETSLPPPPPEFKRCGTNGLSQP) are disordered.

This sequence belongs to the multicopper oxidase family. The cofactor is Cu cation.

It localises to the secreted. The protein localises to the extracellular space. It is found in the apoplast. The catalysed reaction is 4 hydroquinone + O2 = 4 benzosemiquinone + 2 H2O. Functionally, lignin degradation and detoxification of lignin-derived products. The chain is Laccase-18 (LAC18) from Oryza sativa subsp. japonica (Rice).